We begin with the raw amino-acid sequence, 247 residues long: MTTLFISDLHLDPARPAITELFLDFLRTQVPGSDALYILGDLFEAWIGDDTPSTAADAVAEALHAVATTGVPVFFMPGNRDFLVGAAYAQRAGFRILPDPTVIDLYGQPTLLMHGDLLCTDDTAYQAFRAQTRDPAFQAQFLSQPLAARVAFAQQARAASHARQSELKQGDQAQFETVTDVAPAEVDATFVRYGLDRIIHGHTHRPAIHTVQAGGRTCTRVVLGDWYEQGSVLRVDADGLALEQLAL.

Residues D8, H10, D41, N79, and H114 each contribute to the Mn(2+) site. 79–80 (NR) lines the substrate pocket. Residues D122, S160, D171, Q174, and H202 each contribute to the substrate site. Mn(2+) is bound by residues H202 and H204.

The protein belongs to the LpxH family. Mn(2+) serves as cofactor.

The protein localises to the cell inner membrane. It carries out the reaction UDP-2-N,3-O-bis[(3R)-3-hydroxytetradecanoyl]-alpha-D-glucosamine + H2O = 2-N,3-O-bis[(3R)-3-hydroxytetradecanoyl]-alpha-D-glucosaminyl 1-phosphate + UMP + 2 H(+). It participates in glycolipid biosynthesis; lipid IV(A) biosynthesis; lipid IV(A) from (3R)-3-hydroxytetradecanoyl-[acyl-carrier-protein] and UDP-N-acetyl-alpha-D-glucosamine: step 4/6. Its function is as follows. Hydrolyzes the pyrophosphate bond of UDP-2,3-diacylglucosamine to yield 2,3-diacylglucosamine 1-phosphate (lipid X) and UMP by catalyzing the attack of water at the alpha-P atom. Involved in the biosynthesis of lipid A, a phosphorylated glycolipid that anchors the lipopolysaccharide to the outer membrane of the cell. The chain is UDP-2,3-diacylglucosamine hydrolase from Xanthomonas campestris pv. campestris (strain 8004).